We begin with the raw amino-acid sequence, 483 residues long: GTPase Obg (483 aa).

Residues 2-159 (SRFIDRVVLH…RDLVLELKSV (158 aa)) enclose the Obg domain. The OBG-type G domain occupies 160–340 (ADVGLLGFPS…LTFALAKMVR (181 aa)). Residues 166–173 (GFPSAGKS), 191–195 (FTTLV), 212–215 (DVPG), 292–295 (NKTD), and 321–323 (SAV) each bind GTP. Mg(2+)-binding residues include serine 173 and threonine 193. Residues 358–438 (PVKVKDSSFT…IGDVSFEWEP (81 aa)) enclose the OCT domain.

This sequence belongs to the TRAFAC class OBG-HflX-like GTPase superfamily. OBG GTPase family. As to quaternary structure, monomer. It depends on Mg(2+) as a cofactor.

It localises to the cytoplasm. In terms of biological role, an essential GTPase which binds GTP, GDP and possibly (p)ppGpp with moderate affinity, with high nucleotide exchange rates and a fairly low GTP hydrolysis rate. Plays a role in control of the cell cycle, stress response, ribosome biogenesis and in those bacteria that undergo differentiation, in morphogenesis control. In Rhodococcus erythropolis (strain PR4 / NBRC 100887), this protein is GTPase Obg.